The following is a 417-amino-acid chain: Serine hydroxymethyltransferase 1 (417 aa).

(6S)-5,6,7,8-tetrahydrofolate-binding positions include Leu121 and 125–127 (GHL). Lys230 is subject to N6-(pyridoxal phosphate)lysine. 355–357 (SPF) contributes to the (6S)-5,6,7,8-tetrahydrofolate binding site.

It belongs to the SHMT family. As to quaternary structure, homodimer. Pyridoxal 5'-phosphate is required as a cofactor.

The protein localises to the cytoplasm. It carries out the reaction (6R)-5,10-methylene-5,6,7,8-tetrahydrofolate + glycine + H2O = (6S)-5,6,7,8-tetrahydrofolate + L-serine. It participates in one-carbon metabolism; tetrahydrofolate interconversion. Its pathway is amino-acid biosynthesis; glycine biosynthesis; glycine from L-serine: step 1/1. Catalyzes the reversible interconversion of serine and glycine with tetrahydrofolate (THF) serving as the one-carbon carrier. This reaction serves as the major source of one-carbon groups required for the biosynthesis of purines, thymidylate, methionine, and other important biomolecules. Also exhibits THF-independent aldolase activity toward beta-hydroxyamino acids, producing glycine and aldehydes, via a retro-aldol mechanism. In Pseudomonas putida (strain ATCC 47054 / DSM 6125 / CFBP 8728 / NCIMB 11950 / KT2440), this protein is Serine hydroxymethyltransferase 1.